Consider the following 500-residue polypeptide: MSNMQQKTDVILIGAGIMSATLGSLLKELAPEWEIKVFEKLASAGEESSNEWNNAGTGHSALCELNYTSEKSDGSIDISKAVKVNEQFQLSRQFWAYLVKSKLIRNPQDFIMPLPHMSLVQGEKNVEFLKNRFEALSKNPLFQGMEFSDAPETLKKWLPLIMEGRTSNEPMAATKIDSGTDVNFGALTRMLFDYLKTKDVELNYKHSVENIKRTKNGLWEVKVHDMNSGKIEHHTAKFVFIGGGGGSLPLLQKTGIPESKHIGGFPVSGLFMVCKNQKVVEQHHAKVYGKAKVGAPPMSVPHLDTRYIDNKKALLFGPFAGFSPKFLKTGSNLDLIGSVKPNNVLTMLAAGVKEMGLTKYLIQQVMLSHEKRMEELREFIPNAKSEDWDIVVAGQRVQVIKDTDAGGKGTLQFGTEVVSAADGSIAALLGASPGASTAVHVMLEVLEKCFPSRMVEWEGKIKEMIPSYGISLTENPRLFQDLHTSTGRTLGLNEKETVHN.

Belongs to the MQO family. FAD serves as cofactor.

The catalysed reaction is (S)-malate + a quinone = a quinol + oxaloacetate. It functions in the pathway carbohydrate metabolism; tricarboxylic acid cycle; oxaloacetate from (S)-malate (quinone route): step 1/1. This chain is Probable malate:quinone oxidoreductase, found in Bacillus anthracis (strain A0248).